An 812-amino-acid polypeptide reads, in one-letter code: Plasminogen (812 aa).

An N-terminal signal peptide occupies residues 1 to 19 (MDHKEIILLFLLFLKPGQG). A PAN domain is found at 20–98 (DSLDGYVSTQ…RDVILFEKRV (79 aa)). 21 cysteine pairs are disulfide-bonded: Cys-49–Cys-73, Cys-53–Cys-61, Cys-103–Cys-181, Cys-124–Cys-164, Cys-152–Cys-176, Cys-185–Cys-262, Cys-188–Cys-316, Cys-206–Cys-245, Cys-234–Cys-257, Cys-275–Cys-352, Cys-296–Cys-335, Cys-324–Cys-347, Cys-376–Cys-454, Cys-397–Cys-437, Cys-425–Cys-449, Cys-481–Cys-560, Cys-502–Cys-543, Cys-531–Cys-555, Cys-568–Cys-687, Cys-578–Cys-586, and Cys-609–Cys-625. Kringle domains follow at residues 102–181 (ECKT…IPEC), 184–262 (ECMY…IPRC), 274–352 (QCLK…IPSC), 375–454 (ECYQ…LKRC), and 480–560 (DCMY…IPLC). The Peptidase S1 domain maps to 582 to 810 (VVGGCVANPH…YVNWIEREMR (229 aa)). Position 598 is a phosphoserine (Ser-598). Residues His-624 and Asp-667 each act as charge relay system in the active site. Ser-690 bears the Phosphoserine mark. Cystine bridges form between Cys-701-Cys-768, Cys-731-Cys-747, and Cys-758-Cys-786. Ser-762 serves as the catalytic Charge relay system.

Belongs to the peptidase S1 family. Plasminogen subfamily. Interacts (both mature PLG and the angiostatin peptide) with AMOT and CSPG4. Interacts (via the Kringle domains) with HRG; the interaction tethers PLG to the cell surface and enhances its activation. Interacts (via Kringle 4 domain) with ADA; the interaction stimulates PLG activation when in complex with DPP4. Angiostatin: Interacts with ATP5F1A; the interaction inhibits most of the angiogenic effects of angiostatin. In the presence of the inhibitor, the activation involves only cleavage after Arg-581, yielding two chains held together by two disulfide bonds. In the absence of the inhibitor, the activation involves additionally the removal of the activation peptide.

The protein localises to the secreted. It catalyses the reaction Preferential cleavage: Lys-|-Xaa &gt; Arg-|-Xaa, higher selectivity than trypsin. Converts fibrin into soluble products.. Its activity is regulated as follows. Converted into plasmin by plasminogen activators, both plasminogen and its activator being bound to fibrin. Cannot be activated with streptokinase. Plasmin dissolves the fibrin of blood clots and acts as a proteolytic factor in a variety of other processes including embryonic development, tissue remodeling, tumor invasion, and inflammation. In ovulation, weakens the walls of the Graafian follicle. It activates the urokinase-type plasminogen activator, collagenases and several complement zymogens, such as C1, C4 and C5. Cleavage of fibronectin and laminin leads to cell detachment and apoptosis. Also cleaves fibrin, thrombospondin and von Willebrand factor. Its role in tissue remodeling and tumor invasion may be modulated by CSPG4. Binds to cells. In terms of biological role, angiostatin is an angiogenesis inhibitor that blocks neovascularization and growth of experimental primary and metastatic tumors in vivo. In Rattus norvegicus (Rat), this protein is Plasminogen (Plg).